Reading from the N-terminus, the 362-residue chain is MVKKMKKKVVVGMSGGVDSSVTAYLLKEQGYDVIGMTMKVFPGNYHDGSKEKIEDIMKSAKEVCDFLEIPFVEVDLIEEFNKKVATPFMQDYIEGRTPNPCVYCNKHIKFDAFLNKAIELGADYIATGHYANIIEKDGRTLIYRAEDENKDQTYMLYNLKQHQLKHILMPCGDYNKEQIREIAKKIGLKIHNKKDSEEICFIPDDDHGRYIRENCKKKIQEGNFVDEKGKVLGRHKGIINYTIGQRKGLGIALGKPAYVIDIIPEKNQVVLGEEEKIFNNILIAKDVNFIPFDELKEKIKLEAKIRYSAKGEIAEIEPLENNRVKVTFDKKQRAITKGQSVVFYIENLLLGGGIIESVESST.

ATP is bound by residues 12 to 19 and Met38; that span reads GMSGGVDS. The active-site Nucleophile is Cys104. A disulfide bridge connects residues Cys104 and Cys200. Gly128 contributes to the ATP binding site. Positions 150–152 are interaction with tRNA; sequence KDQ. Cys200 serves as the catalytic Cysteine persulfide intermediate. The tract at residues 306–307 is interaction with tRNA; that stretch reads RY.

Belongs to the MnmA/TRMU family.

Its subcellular location is the cytoplasm. It catalyses the reaction S-sulfanyl-L-cysteinyl-[protein] + uridine(34) in tRNA + AH2 + ATP = 2-thiouridine(34) in tRNA + L-cysteinyl-[protein] + A + AMP + diphosphate + H(+). Functionally, catalyzes the 2-thiolation of uridine at the wobble position (U34) of tRNA, leading to the formation of s(2)U34. The chain is tRNA-specific 2-thiouridylase MnmA 1 from Clostridium tetani (strain Massachusetts / E88).